Here is a 349-residue protein sequence, read N- to C-terminus: Phosphoribosylformylglycinamidine cyclo-ligase (349 aa).

The protein belongs to the AIR synthase family.

Its subcellular location is the cytoplasm. It catalyses the reaction 2-formamido-N(1)-(5-O-phospho-beta-D-ribosyl)acetamidine + ATP = 5-amino-1-(5-phospho-beta-D-ribosyl)imidazole + ADP + phosphate + H(+). The protein operates within purine metabolism; IMP biosynthesis via de novo pathway; 5-amino-1-(5-phospho-D-ribosyl)imidazole from N(2)-formyl-N(1)-(5-phospho-D-ribosyl)glycinamide: step 2/2. The polypeptide is Phosphoribosylformylglycinamidine cyclo-ligase (Lactobacillus delbrueckii subsp. bulgaricus (strain ATCC 11842 / DSM 20081 / BCRC 10696 / JCM 1002 / NBRC 13953 / NCIMB 11778 / NCTC 12712 / WDCM 00102 / Lb 14)).